The following is a 122-amino-acid chain: Mating-type protein A1 (122 aa).

The homeobox DNA-binding region spans 62-121 (NHKRGCNIDKKTKDMLNKVYEQKQYLTKEEREFVAKKCNLTPLQVRVWFANKRIRNKNTK).

The protein belongs to the MATA1 family. In terms of assembly, forms a heterodimer with ALPHA2.

Its subcellular location is the nucleus. Mating type proteins are sequence specific DNA-binding proteins that act as master switches in yeast differentiation by controlling gene expression in a cell type-specific fashion. Transcriptional corepressor that acts in conjunction with ALPHA2 to repress transcription of haploid-specific genes and of MATALPHA1. This Nakaseomyces delphensis (Yeast) protein is Mating-type protein A1 (MATA1).